The sequence spans 150 residues: Large ribosomal subunit protein bL9 (150 aa).

The protein belongs to the bacterial ribosomal protein bL9 family.

Its function is as follows. Binds to the 23S rRNA. The polypeptide is Large ribosomal subunit protein bL9 (Streptococcus sanguinis (strain SK36)).